The following is a 212-amino-acid chain: Large ribosomal subunit protein uL3 (212 aa).

A disordered region spans residues 136–155 (THGNSLSHRSNGSIGQNQTP). Q153 carries the post-translational modification N5-methylglutamine.

It belongs to the universal ribosomal protein uL3 family. In terms of assembly, part of the 50S ribosomal subunit. Forms a cluster with proteins L14 and L19. In terms of processing, methylated by PrmB.

One of the primary rRNA binding proteins, it binds directly near the 3'-end of the 23S rRNA, where it nucleates assembly of the 50S subunit. This is Large ribosomal subunit protein uL3 from Shewanella oneidensis (strain ATCC 700550 / JCM 31522 / CIP 106686 / LMG 19005 / NCIMB 14063 / MR-1).